The sequence spans 1012 residues: Beta-alanine-activating enzyme (1012 aa).

ATP is bound by residues 177 to 185 (TTGTTGKPK), Asp-411, Arg-426, and Lys-516.

This sequence belongs to the ATP-dependent AMP-binding enzyme family.

Functionally, covalently binds beta-alanine in an ATP-dependent manner to form a thioester bond with its phosphopantetheine group and transfers it to an, as yet, unknown acceptor. May be required for a post-translational protein modification or for post-transcriptional modification of an RNA. In Drosophila melanogaster (Fruit fly), this protein is Beta-alanine-activating enzyme.